A 101-amino-acid polypeptide reads, in one-letter code: Large ribosomal subunit protein uL24 (101 aa).

Belongs to the universal ribosomal protein uL24 family. As to quaternary structure, part of the 50S ribosomal subunit.

Its function is as follows. One of two assembly initiator proteins, it binds directly to the 5'-end of the 23S rRNA, where it nucleates assembly of the 50S subunit. Functionally, one of the proteins that surrounds the polypeptide exit tunnel on the outside of the subunit. This is Large ribosomal subunit protein uL24 from Streptococcus gordonii (strain Challis / ATCC 35105 / BCRC 15272 / CH1 / DL1 / V288).